The chain runs to 558 residues: Polypeptide N-acetylgalactosaminyltransferase 16 (558 aa).

Residues 1-6 (MRKIRA) lie on the Cytoplasmic side of the membrane. The helical; Signal-anchor for type II membrane protein transmembrane segment at 7–26 (NAIAILTVAWILGTFYYLWQ) threads the bilayer. Topologically, residues 27-558 (DNRAHAASSG…AQQWQLLPHT (532 aa)) are lumenal. The interval 33 to 54 (ASSGGRGAQRAGRRSEQLREDR) is disordered. Basic and acidic residues predominate over residues 45-54 (RRSEQLREDR). Disulfide bonds link C113-C340, C331-C409, C441-C460, C486-C506, and C530-C543. The interval 122 to 227 (LPATSVIITF…TEWLPPMLQR (106 aa)) is catalytic subdomain A. Residues D163 and R188 each contribute to the substrate site. D211 serves as a coordination point for Mn(2+). S212 contributes to the substrate binding site. H213 contacts Mn(2+). Residues 286–348 (PIRTPVIAGG…PCSRVGHVFR (63 aa)) are catalytic subdomain B. W317 is a binding site for substrate. H345 contributes to the Mn(2+) binding site. Substrate-binding residues include R348, H351, and Y353. One can recognise a Ricin B-type lectin domain in the interval 428 to 555 (KEALPGIIKQ…DAQAQQWQLL (128 aa)).

The protein belongs to the glycosyltransferase 2 family. GalNAc-T subfamily. It depends on Mn(2+) as a cofactor.

Its subcellular location is the golgi apparatus membrane. The catalysed reaction is L-seryl-[protein] + UDP-N-acetyl-alpha-D-galactosamine = a 3-O-[N-acetyl-alpha-D-galactosaminyl]-L-seryl-[protein] + UDP + H(+). It catalyses the reaction L-threonyl-[protein] + UDP-N-acetyl-alpha-D-galactosamine = a 3-O-[N-acetyl-alpha-D-galactosaminyl]-L-threonyl-[protein] + UDP + H(+). It participates in protein modification; protein glycosylation. Functionally, catalyzes the initial reaction in O-linked oligosaccharide biosynthesis, the transfer of an N-acetyl-D-galactosamine residue to a serine or threonine residue on the protein receptor. This Homo sapiens (Human) protein is Polypeptide N-acetylgalactosaminyltransferase 16 (GALNT16).